The chain runs to 600 residues: Proline--tRNA ligase (600 aa).

Belongs to the class-II aminoacyl-tRNA synthetase family. ProS type 1 subfamily. Homodimer.

The protein resides in the cytoplasm. The catalysed reaction is tRNA(Pro) + L-proline + ATP = L-prolyl-tRNA(Pro) + AMP + diphosphate. Catalyzes the attachment of proline to tRNA(Pro) in a two-step reaction: proline is first activated by ATP to form Pro-AMP and then transferred to the acceptor end of tRNA(Pro). As ProRS can inadvertently accommodate and process non-cognate amino acids such as alanine and cysteine, to avoid such errors it has two additional distinct editing activities against alanine. One activity is designated as 'pretransfer' editing and involves the tRNA(Pro)-independent hydrolysis of activated Ala-AMP. The other activity is designated 'posttransfer' editing and involves deacylation of mischarged Ala-tRNA(Pro). The misacylated Cys-tRNA(Pro) is not edited by ProRS. The sequence is that of Proline--tRNA ligase from Prochlorococcus marinus (strain MIT 9215).